The following is a 24-amino-acid chain: Lectin (24 aa).

It belongs to the leguminous lectin family. Homotetramer.

Functionally, agglutinates erythrocytes of blood group A. Binds in decreasing order of affinity: N-acetyl-D-galactosamine, D-galactose, and D-galactosamine. The sequence is that of Lectin from Crotalaria pallida (Smooth rattlebox).